The following is a 434-amino-acid chain: Adenylosuccinate synthetase (434 aa).

Residues 15-21 (GDEGKGK) and 43-45 (GHT) contribute to the GTP site. Catalysis depends on Asp16, which acts as the Proton acceptor. The Mg(2+) site is built by Asp16 and Gly43. Residues 16–19 (DEGK), 41–44 (NAGH), Thr133, Arg147, Gln228, Thr243, and Arg307 each bind IMP. His44 serves as the catalytic Proton donor. Position 303–309 (303–309 (SVTGRAR)) interacts with substrate. Residues Arg309, 335 to 337 (KLD), and 418 to 420 (STG) contribute to the GTP site.

Belongs to the adenylosuccinate synthetase family. As to quaternary structure, homodimer. Mg(2+) serves as cofactor.

The protein localises to the cytoplasm. The catalysed reaction is IMP + L-aspartate + GTP = N(6)-(1,2-dicarboxyethyl)-AMP + GDP + phosphate + 2 H(+). Its pathway is purine metabolism; AMP biosynthesis via de novo pathway; AMP from IMP: step 1/2. In terms of biological role, plays an important role in the de novo pathway of purine nucleotide biosynthesis. Catalyzes the first committed step in the biosynthesis of AMP from IMP. The protein is Adenylosuccinate synthetase of Neisseria meningitidis serogroup C / serotype 2a (strain ATCC 700532 / DSM 15464 / FAM18).